The sequence spans 602 residues: Peptide-N(4)-(N-acetyl-beta-glucosaminyl)asparagine amidase (602 aa).

The Thioredoxin domain maps to 2–130 (PVREVSRLPE…EKKFLERFVG (129 aa)). Residues C189, C192, C222, and C225 each coordinate Zn(2+). The active-site Nucleophile is the C248. Catalysis depends on residues H275 and D292. The PAW domain occupies 400–602 (DMGGRTTGSK…ESMVVRVYMK (203 aa)).

This sequence belongs to the transglutaminase-like superfamily. PNGase family. Requires Zn(2+) as cofactor.

It localises to the cytoplasm. It is found in the endoplasmic reticulum. It catalyses the reaction Hydrolysis of an N(4)-(acetyl-beta-D-glucosaminyl)asparagine residue in which the glucosamine residue may be further glycosylated, to yield a (substituted) N-acetyl-beta-D-glucosaminylamine and a peptide containing an aspartate residue.. Its function is as follows. Specifically deglycosylates the denatured form of N-linked glycoproteins in the cytoplasm and assists their proteasome-mediated degradation. Cleaves the beta-aspartyl-glucosamine (GlcNAc) of the glycan and the amide side chain of Asn, converting Asn to Asp. Prefers proteins containing high-mannose over those bearing complex type oligosaccharides. Can recognize misfolded proteins in the endoplasmic reticulum that are exported to the cytosol to be destroyed and deglycosylate them, while it has no activity toward native proteins. Deglycosylation is a prerequisite for subsequent proteasome-mediated degradation of some, but not all, misfolded glycoproteins. Also displays oxidoreductase (thioredoxin) activity. The polypeptide is Peptide-N(4)-(N-acetyl-beta-glucosaminyl)asparagine amidase (png-1) (Caenorhabditis briggsae).